The following is a 586-amino-acid chain: uncharacterized protein (586 aa).

This is an uncharacterized protein from Saccharomyces cerevisiae (strain ATCC 204508 / S288c) (Baker's yeast).